The primary structure comprises 70 residues: MAIEKSVASASIAEVIDRILDKGVVIDAFVRVSLVGIELIAIEVRAVVASIETWLKYAEAVGLTVDPATT.

The protein belongs to the gas vesicle GvpA family. The gas vesicle shell is 2 nm thick and consists of a single layer of this protein. It forms helical ribs nearly perpendicular to the long axis of the vesicle.

The protein localises to the gas vesicle shell. Gas vesicles are hollow, gas filled proteinaceous nanostructures found in some microorganisms. During planktonic growth they allow positioning of the organism at a favorable depth for light or nutrient acquisition. GvpA forms the protein shell. The protein is Gas vesicle protein A of Cereibacter sphaeroides (strain ATCC 17023 / DSM 158 / JCM 6121 / CCUG 31486 / LMG 2827 / NBRC 12203 / NCIMB 8253 / ATH 2.4.1.) (Rhodobacter sphaeroides).